The sequence spans 1390 residues: DNA-directed RNA polymerase subunit beta (1390 aa).

The protein belongs to the RNA polymerase beta chain family. The RNAP catalytic core consists of 2 alpha, 1 beta, 1 beta' and 1 omega subunit. When a sigma factor is associated with the core the holoenzyme is formed, which can initiate transcription.

It catalyses the reaction RNA(n) + a ribonucleoside 5'-triphosphate = RNA(n+1) + diphosphate. DNA-dependent RNA polymerase catalyzes the transcription of DNA into RNA using the four ribonucleoside triphosphates as substrates. This is DNA-directed RNA polymerase subunit beta from Rhodopseudomonas palustris (strain HaA2).